The sequence spans 367 residues: GDSL esterase/lipase At4g28780 (367 aa).

The N-terminal stretch at 1-28 (MSTFLLTWIIMTVALSVTLFLMPQQTNA) is a signal peptide. The Nucleophile role is filled by serine 38. Residue asparagine 119 is glycosylated (N-linked (GlcNAc...) asparagine). Active-site residues include aspartate 328 and histidine 331. N-linked (GlcNAc...) asparagine glycosylation is present at asparagine 356.

Belongs to the 'GDSL' lipolytic enzyme family.

The protein resides in the secreted. The chain is GDSL esterase/lipase At4g28780 from Arabidopsis thaliana (Mouse-ear cress).